We begin with the raw amino-acid sequence, 274 residues long: 3-methyl-2-oxobutanoate hydroxymethyltransferase (274 aa).

Mg(2+) is bound by residues aspartate 49 and aspartate 88. 3-methyl-2-oxobutanoate is bound by residues 49–50 (DS), aspartate 88, and lysine 118. Residue glutamate 120 coordinates Mg(2+). Residue glutamate 187 is the Proton acceptor of the active site.

Belongs to the PanB family. Homodecamer; pentamer of dimers. Mg(2+) serves as cofactor.

Its subcellular location is the cytoplasm. It catalyses the reaction 3-methyl-2-oxobutanoate + (6R)-5,10-methylene-5,6,7,8-tetrahydrofolate + H2O = 2-dehydropantoate + (6S)-5,6,7,8-tetrahydrofolate. Its pathway is cofactor biosynthesis; (R)-pantothenate biosynthesis; (R)-pantoate from 3-methyl-2-oxobutanoate: step 1/2. Catalyzes the reversible reaction in which hydroxymethyl group from 5,10-methylenetetrahydrofolate is transferred onto alpha-ketoisovalerate to form ketopantoate. The polypeptide is 3-methyl-2-oxobutanoate hydroxymethyltransferase (Allorhizobium ampelinum (strain ATCC BAA-846 / DSM 112012 / S4) (Agrobacterium vitis (strain S4))).